The chain runs to 202 residues: Probable septum site-determining protein MinC (202 aa).

This sequence belongs to the MinC family. Interacts with MinD and FtsZ.

Functionally, cell division inhibitor that blocks the formation of polar Z ring septums. Rapidly oscillates between the poles of the cell to destabilize FtsZ filaments that have formed before they mature into polar Z rings. Prevents FtsZ polymerization. The protein is Probable septum site-determining protein MinC of Sulfurihydrogenibium sp. (strain YO3AOP1).